The chain runs to 139 residues: Succinate dehydrogenase assembly factor 2, mitochondrial (139 aa).

The transit peptide at 1–28 (MLRKTNLSNITTLLRSARCMNRMPQLRF) directs the protein to the mitochondrion.

It belongs to the SDHAF2 family. In terms of assembly, interacts with the flavoprotein subunit within the SDH catalytic dimer.

The protein resides in the mitochondrion. The protein localises to the mitochondrion matrix. Functionally, plays an essential role in the assembly of succinate dehydrogenase (SDH), an enzyme complex (also referred to as respiratory complex II) that is a component of both the tricarboxylic acid (TCA) cycle and the mitochondrial electron transport chain, and which couples the oxidation of succinate to fumarate with the reduction of ubiquinone (coenzyme Q) to ubiquinol. Required for flavinylation (covalent attachment of FAD) of the flavoprotein subunit of the SDH catalytic dimer. This Schizosaccharomyces pombe (strain 972 / ATCC 24843) (Fission yeast) protein is Succinate dehydrogenase assembly factor 2, mitochondrial.